Here is a 577-residue protein sequence, read N- to C-terminus: Arginine--tRNA ligase (577 aa).

Positions 122-132 match the 'HIGH' region motif; it reads PNVAKEMHVGH.

It belongs to the class-I aminoacyl-tRNA synthetase family. In terms of assembly, monomer.

Its subcellular location is the cytoplasm. The catalysed reaction is tRNA(Arg) + L-arginine + ATP = L-arginyl-tRNA(Arg) + AMP + diphosphate. This Vibrio vulnificus (strain YJ016) protein is Arginine--tRNA ligase.